The primary structure comprises 114 residues: Flagellar hook-basal body complex protein FliE (114 aa).

It belongs to the FliE family.

The protein resides in the bacterial flagellum basal body. The polypeptide is Flagellar hook-basal body complex protein FliE (Burkholderia lata (strain ATCC 17760 / DSM 23089 / LMG 22485 / NCIMB 9086 / R18194 / 383)).